Consider the following 318-residue polypeptide: Malate dehydrogenase (318 aa).

Residues 11–17 and D37 each bind NAD(+); that span reads GAGGNVG. Positions 86 and 92 each coordinate substrate. Residues N99 and 122-124 contribute to the NAD(+) site; that span reads VTN. Substrate is bound by residues N124 and R155. The active-site Proton acceptor is H179.

The protein belongs to the LDH/MDH superfamily. MDH type 3 family.

It carries out the reaction (S)-malate + NAD(+) = oxaloacetate + NADH + H(+). In terms of biological role, catalyzes the reversible oxidation of malate to oxaloacetate. This Nitratiruptor sp. (strain SB155-2) protein is Malate dehydrogenase.